Here is a 432-residue protein sequence, read N- to C-terminus: 3-phosphoshikimate 1-carboxyvinyltransferase (432 aa).

3-phosphoshikimate is bound by residues Lys-25, Ser-26, and Arg-30. Residue Lys-25 participates in phosphoenolpyruvate binding. Phosphoenolpyruvate is bound by residues Gly-97 and Arg-125. 3-phosphoshikimate-binding residues include Ser-170, Gln-172, Asp-318, and Lys-345. Position 172 (Gln-172) interacts with phosphoenolpyruvate. Asp-318 (proton acceptor) is an active-site residue. Phosphoenolpyruvate-binding residues include Arg-349 and Arg-393.

The protein belongs to the EPSP synthase family. Monomer.

The protein localises to the cytoplasm. It catalyses the reaction 3-phosphoshikimate + phosphoenolpyruvate = 5-O-(1-carboxyvinyl)-3-phosphoshikimate + phosphate. The protein operates within metabolic intermediate biosynthesis; chorismate biosynthesis; chorismate from D-erythrose 4-phosphate and phosphoenolpyruvate: step 6/7. Its function is as follows. Catalyzes the transfer of the enolpyruvyl moiety of phosphoenolpyruvate (PEP) to the 5-hydroxyl of shikimate-3-phosphate (S3P) to produce enolpyruvyl shikimate-3-phosphate and inorganic phosphate. The protein is 3-phosphoshikimate 1-carboxyvinyltransferase of Geobacillus thermodenitrificans (strain NG80-2).